A 516-amino-acid chain; its full sequence is Facilitated glucose transporter homolog (516 aa).

Positions 1 to 37 are disordered; sequence MNAVVASQNKNDRSFSNMESESSSNVEKSEKENHHQS. The Cytoplasmic segment spans residues 1 to 47; that stretch reads MNAVVASQNKNDRSFSNMESESSSNVEKSEKENHHQSLPDENWTPFL. Over residues 14–26 the composition is skewed to low complexity; sequence SFSNMESESSSNV. Over residues 27–37 the composition is skewed to basic and acidic residues; it reads EKSEKENHHQS. A helical membrane pass occupies residues 48-68; the sequence is FFCISSIALASFQDGFQIGCI. The Extracellular portion of the chain corresponds to 69-101; the sequence is NAPGPLIIDWIKKCHFELFGEVLSQYQADFIWS. A helical membrane pass occupies residues 102 to 122; that stretch reads VAVSMFSVGGMFGSFCSGFLA. Over 123-138 the chain is Cytoplasmic; the sequence is DKFGRKSTLLYNNILA. The helical transmembrane segment at 139–159 threads the bilayer; it reads LLAAVCLSTSKLFNFYPMIVF. The Extracellular portion of the chain corresponds to 160 to 161; that stretch reads GR. Residues 162-182 form a helical membrane-spanning segment; that stretch reads FLVGLNCGITSGLVPMFLTEL. Over 183–200 the chain is Cytoplasmic; sequence APANLRGKCGSFHQLNIS. A helical transmembrane segment spans residues 201 to 221; that stretch reads VAIVLSQALGLPQIFGTQVGW. Position 222 (proline 222) is a topological domain, extracellular. A helical transmembrane segment spans residues 223-243; the sequence is YIFACVAIPTFLQLATIPFCV. Topologically, residues 244 to 306 are cytoplasmic; sequence ESPKYLISKL…SLFKGDNQWP (63 aa). A helical transmembrane segment spans residues 307–327; that stretch reads MIVSILMMFSQQFSGISAVTF. Over 328–344 the chain is Extracellular; it reads YSTLIFKRNGLSGNEPM. Residues 345–365 traverse the membrane as a helical segment; the sequence is YATVGFGCIKLIATFGCLFLI. Topologically, residues 366–376 are cytoplasmic; it reads DHPKFGRKRLH. Residues 377–397 traverse the membrane as a helical segment; the sequence is IAGLSGMCISSILIVITLTLS. The Extracellular segment spans residues 398–409; the sequence is NAGYHWASYMNV. The helical transmembrane segment at 410–430 threads the bilayer; it reads LFILSFVVTFAFGPGPIPWFF. Residues 431–444 are Cytoplasmic-facing; sequence TSELFDSATRGRAA. Residues 445 to 465 form a helical membrane-spanning segment; sequence AVSATSNWVANWMVGLTFLPI. Over 466 to 471 the chain is Extracellular; sequence NNIIHQ. Residues 472 to 492 form a helical membrane-spanning segment; sequence YAFLMFTFFTFTFAIFTWKFV. Residues 493-516 are Cytoplasmic-facing; sequence PETKGKSPSAIRKELAFMRKRICS.

This sequence belongs to the major facilitator superfamily. Sugar transporter (TC 2.A.1.1) family. As to expression, expressed in seam cells from the early embryonic stage through the L2 stage (at protein level).

Its subcellular location is the cell membrane. Functionally, appears to have no transport activity for glucose. This chain is Facilitated glucose transporter homolog, found in Caenorhabditis elegans.